The chain runs to 633 residues: DNA polymerase DpoZ (633 aa).

Belongs to the DNA polymerase type-A family. DpoZ subfamily.

The enzyme catalyses DNA(n) + a 2'-deoxyribonucleoside 5'-triphosphate = DNA(n+1) + diphosphate. It carries out the reaction dZTP + DNA(n) = DNA(n)-Z + diphosphate. In terms of biological role, DNA polymerase that preferentially incorporates the non-canonical base aminoadenine/dZTP instead of adenine into the synthesized DNA. More efficient in using dZTP instead of dATP as a substrate. In addition to this preference for dZTP, the phage also encodes a dATP triphosphohydrolase that removes dATP and its precursor dADP from the nucleotide pool of the host. The polypeptide is DNA polymerase DpoZ (dpoZ) (Vibrio phage phiVC8).